We begin with the raw amino-acid sequence, 23 residues long: Nephrotoxin PsTX-115 (23 aa).

Its subcellular location is the secreted. The protein localises to the nematocyst. Its function is as follows. Nephrotoxin. When injected intravenously in rats, causes severe destructive glomerular changes. At 24 hours post-injection partial disruption of the glomerular basement membrane, massive thrombus formation in glomerular capillaries, severe mesangiolysis and infiltrating cells were observed in the majority of glomeruli. This is Nephrotoxin PsTX-115 from Phyllodiscus semoni (Night anemone).